The chain runs to 168 residues: 2-C-methyl-D-erythritol 2,4-cyclodiphosphate synthase (168 aa).

A divalent metal cation contacts are provided by aspartate 13 and histidine 15. 4-CDP-2-C-methyl-D-erythritol 2-phosphate contacts are provided by residues aspartate 13–histidine 15 and histidine 39–serine 40. Histidine 47 lines the a divalent metal cation pocket. 4-CDP-2-C-methyl-D-erythritol 2-phosphate contacts are provided by residues aspartate 61 to glycine 63, phenylalanine 66 to aspartate 70, phenylalanine 144, and arginine 147.

It belongs to the IspF family. As to quaternary structure, homotrimer. The cofactor is a divalent metal cation.

It catalyses the reaction 4-CDP-2-C-methyl-D-erythritol 2-phosphate = 2-C-methyl-D-erythritol 2,4-cyclic diphosphate + CMP. It participates in isoprenoid biosynthesis; isopentenyl diphosphate biosynthesis via DXP pathway; isopentenyl diphosphate from 1-deoxy-D-xylulose 5-phosphate: step 4/6. In terms of biological role, involved in the biosynthesis of isopentenyl diphosphate (IPP) and dimethylallyl diphosphate (DMAPP), two major building blocks of isoprenoid compounds. Catalyzes the conversion of 4-diphosphocytidyl-2-C-methyl-D-erythritol 2-phosphate (CDP-ME2P) to 2-C-methyl-D-erythritol 2,4-cyclodiphosphate (ME-CPP) with a corresponding release of cytidine 5-monophosphate (CMP). The polypeptide is 2-C-methyl-D-erythritol 2,4-cyclodiphosphate synthase (Ralstonia nicotianae (strain ATCC BAA-1114 / GMI1000) (Ralstonia solanacearum)).